The chain runs to 183 residues: Dual-action ribosomal maturation protein DarP (183 aa).

The tract at residues 1-21 (MKQKPEDWLNDVPDNQEDDED) is disordered.

Belongs to the DarP family.

The protein localises to the cytoplasm. Functionally, member of a network of 50S ribosomal subunit biogenesis factors which assembles along the 30S-50S interface, preventing incorrect 23S rRNA structures from forming. Promotes peptidyl transferase center (PTC) maturation. The sequence is that of Dual-action ribosomal maturation protein DarP from Pectobacterium atrosepticum (strain SCRI 1043 / ATCC BAA-672) (Erwinia carotovora subsp. atroseptica).